A 325-amino-acid polypeptide reads, in one-letter code: MTLGDRLGLILIHPAVTTVPGLLEAKKLELSKKNYVIGDQFLINKLNDNSVTLEKDKYDLIYYLTPEKVEDIKFPVKLIPVIQSALKTNGSFYGLTEAFKVDALVNGFEIVSVEDNDYHWIKKAGSANANVVQLKTKKKLGNEVKSGKLPTFKSKLPTFKKKDAGNNEQVVKLSVEDVEDDLDDDPEVSNELLSKAKFFNSLSLNQDAEIDENNLIKSTDGDGITMITCGKTNTKKRRACKDCTCGMKELEEEEIDNIRTQQDKVVQFTSEELTEIDFTIEGKLVGGCGSCSLGDAFRCSGCPYLGLPAFKPGQPISLSSISDDL.

An N-terminal SAM-like domain region spans residues 1 to 169 (MTLGDRLGLI…KKKDAGNNEQ (169 aa)). The interval 170-222 (VVKLSVEDVEDDLDDDPEVSNELLSKAKFFNSLSLNQDAEIDENNLIKSTDGD) is linker. Cys229, Cys240, Cys243, and Cys245 together coordinate [2Fe-2S] cluster. The fe-S binding site A stretch occupies residues 229-245 (CGKTNTKKRRACKDCTC). Cys288, Cys291, Cys299, and Cys302 together coordinate [4Fe-4S] cluster. Short sequence motifs (cx2C motif) lie at residues 288 to 291 (CGSC) and 299 to 302 (CSGC). Positions 288–302 (CGSCSLGDAFRCSGC) are fe-S binding site B.

It belongs to the anamorsin family. Monomer. Interacts with TAH18. Interacts with MIA40. It depends on [2Fe-2S] cluster as a cofactor. Requires [4Fe-4S] cluster as cofactor.

It is found in the cytoplasm. The protein resides in the mitochondrion intermembrane space. Its function is as follows. Component of the cytosolic iron-sulfur (Fe-S) protein assembly (CIA) machinery required for the maturation of extramitochondrial Fe-S proteins. Part of an electron transfer chain functioning in an early step of cytosolic Fe-S biogenesis, facilitating the de novo assembly of a [4Fe-4S] cluster on the scaffold complex CFD1-NBP35. Electrons are transferred to DRE2 from NADPH via the FAD- and FMN-containing protein TAH18. TAH18-DRE2 are also required for the assembly of the diferric tyrosyl radical cofactor of ribonucleotide reductase (RNR), probably by providing electrons for reduction during radical cofactor maturation in the catalytic small subunit RNR2. The protein is Fe-S cluster assembly protein DRE2 of Vanderwaltozyma polyspora (strain ATCC 22028 / DSM 70294 / BCRC 21397 / CBS 2163 / NBRC 10782 / NRRL Y-8283 / UCD 57-17) (Kluyveromyces polysporus).